Reading from the N-terminus, the 143-residue chain is Sarcoplasmic/endoplasmic reticulum calcium ATPase (143 aa).

The protein belongs to the cation transport ATPase (P-type) (TC 3.A.3) family. Type IIA subfamily.

It is found in the endoplasmic reticulum membrane. It localises to the sarcoplasmic reticulum membrane. It catalyses the reaction Ca(2+)(in) + ATP + H2O = Ca(2+)(out) + ADP + phosphate + H(+). Functionally, this magnesium-dependent enzyme catalyzes the hydrolysis of ATP coupled with the transport of calcium. Transports calcium ions from the cytosol into the sarcoplasmic/endoplasmic reticulum lumen. Contributes to calcium sequestration involved in muscular excitation/contraction. The sequence is that of Sarcoplasmic/endoplasmic reticulum calcium ATPase from Chionoecetes opilio (Atlantic snow crab).